The chain runs to 323 residues: Methionine adenosyltransferase 2 subunit beta (323 aa).

NADP(+)-binding positions include 26–29, 49–51, 60–61, Cys82, Arg86, Tyr146, and Leu172; these read TGLL, YNR, and NL. Residues 308–323 form a required for interaction with MAT2A region; it reads LWPFQHDKRWRQTVFH.

Belongs to the dTDP-4-dehydrorhamnose reductase family. MAT2B subfamily. As to quaternary structure, heterotrimer; composed of a catalytic mat2a homodimer that binds one regulatory mat2b chain. Heterohexamer; composed of a central, catalytic mat2a homotetramer flanked on either side by a regulatory mat2b chain. NADP binding increases the affinity for mat2a.

It functions in the pathway amino-acid biosynthesis; S-adenosyl-L-methionine biosynthesis; S-adenosyl-L-methionine from L-methionine: step 1/1. In terms of biological role, regulatory subunit of S-adenosylmethionine synthetase 2, an enzyme that catalyzes the formation of S-adenosylmethionine from methionine and ATP. Regulates MAT2A catalytic activity by changing its kinetic properties, increasing its affinity for L-methionine. Can bind NADP (in vitro). The polypeptide is Methionine adenosyltransferase 2 subunit beta (mat2b) (Danio rerio (Zebrafish)).